The following is a 95-amino-acid chain: Large ribosomal subunit protein bL27 (95 aa).

A propeptide spanning residues 1–6 (MFLQLF) is cleaved from the precursor.

The protein belongs to the bacterial ribosomal protein bL27 family. In terms of processing, the N-terminus is cleaved by ribosomal processing cysteine protease Prp.

The sequence is that of Large ribosomal subunit protein bL27 from Symbiobacterium thermophilum (strain DSM 24528 / JCM 14929 / IAM 14863 / T).